The primary structure comprises 687 residues: Complement C1s subcomponent (687 aa).

The N-terminal stretch at Met1 to Ala15 is a signal peptide. The CUB 1 domain occupies Glu16–Val130. Residues Glu60, Asp68, Asp113, Asp131, Val132, and Glu134 each contribute to the Ca(2+) site. A disulfide bridge connects residues Cys65 and Cys83. The EGF-like; calcium-binding domain occupies Asp131 to Gly172. Intrachain disulfides connect Cys135–Cys147, Cys143–Cys156, and Cys158–Cys171. 3 residues coordinate Ca(2+): Asn149, Tyr150, and Gly153. Asn149 carries the post-translational modification (3R)-3-hydroxyasparagine. The N-linked (GlcNAc...) asparagine glycan is linked to Asn174. Disulfide bonds link Cys175–Cys202, Cys234–Cys251, Cys294–Cys341, Cys321–Cys354, Cys359–Cys403, Cys386–Cys421, Cys425–Cys548, Cys594–Cys617, and Cys626–Cys658. The region spanning Cys175 to Asp290 is the CUB 2 domain. 2 consecutive Sushi domains span residues Ile292–Pro356 and Val357–Pro423. Asn406 carries N-linked (GlcNAc...) asparagine glycosylation. The Peptidase S1 domain maps to Ile438–Gln679. Residues His475 and Asp528 each act as charge relay system in the active site. Ser630 functions as the Charge relay system in the catalytic mechanism.

This sequence belongs to the peptidase S1 family. In terms of assembly, C1 is a calcium-dependent trimolecular complex of C1q, C1r and C1s in the molar ration of 1:2:2. Activated C1s is an disulfide-linked heterodimer of a heavy chain and a light chain. In terms of processing, the iron and 2-oxoglutarate dependent 3-hydroxylation of aspartate and asparagine is (R) stereospecific within EGF domains.

The enzyme catalyses Cleavage of Arg-|-Ala bond in complement component C4 to form C4a and C4b, and Lys(or Arg)-|-Lys bond in complement component C2 to form C2a and C2b: the 'classical' pathway C3 convertase.. Inhibited by SERPING1. Functionally, C1s B chain is a serine protease that combines with C1q and C1r to form C1, the first component of the classical pathway of the complement system. C1r activates C1s so that it can, in turn, activate C2 and C4. Also cleaves IGFBP5 and thereby inhibits the trophic effects of IGF1. The protein is Complement C1s subcomponent of Sus scrofa (Pig).